We begin with the raw amino-acid sequence, 244 residues long: 2-C-methyl-D-erythritol 4-phosphate cytidylyltransferase (244 aa).

This sequence belongs to the IspD/TarI cytidylyltransferase family. IspD subfamily.

It catalyses the reaction 2-C-methyl-D-erythritol 4-phosphate + CTP + H(+) = 4-CDP-2-C-methyl-D-erythritol + diphosphate. Its pathway is isoprenoid biosynthesis; isopentenyl diphosphate biosynthesis via DXP pathway; isopentenyl diphosphate from 1-deoxy-D-xylulose 5-phosphate: step 2/6. In terms of biological role, catalyzes the formation of 4-diphosphocytidyl-2-C-methyl-D-erythritol from CTP and 2-C-methyl-D-erythritol 4-phosphate (MEP). This Solibacter usitatus (strain Ellin6076) protein is 2-C-methyl-D-erythritol 4-phosphate cytidylyltransferase.